The primary structure comprises 720 residues: Polyribonucleotide nucleotidyltransferase (720 aa).

Mg(2+)-binding residues include aspartate 485 and aspartate 491. The region spanning 552–615 is the KH domain; it reads PRIHTIKINP…EAIRRIQALT (64 aa). The S1 motif domain occupies 621 to 689; it reads GRIYEGKVTR…RQGRIRLSIK (69 aa). The tract at residues 697-720 is disordered; it reads PAAESVAESAPAQEAVVEQVPMTE. Over residues 698–720 the composition is skewed to low complexity; the sequence is AAESVAESAPAQEAVVEQVPMTE.

The protein belongs to the polyribonucleotide nucleotidyltransferase family. Component of the RNA degradosome, which is a multiprotein complex involved in RNA processing and mRNA degradation. Mg(2+) is required as a cofactor.

It is found in the cytoplasm. The enzyme catalyses RNA(n+1) + phosphate = RNA(n) + a ribonucleoside 5'-diphosphate. Involved in mRNA degradation. Catalyzes the phosphorolysis of single-stranded polyribonucleotides processively in the 3'- to 5'-direction. In Tolumonas auensis (strain DSM 9187 / NBRC 110442 / TA 4), this protein is Polyribonucleotide nucleotidyltransferase.